A 249-amino-acid polypeptide reads, in one-letter code: Ubiquinone/menaquinone biosynthesis C-methyltransferase UbiE (249 aa).

S-adenosyl-L-methionine contacts are provided by residues Thr-74, Asp-93, and 121–122; that span reads DA.

This sequence belongs to the class I-like SAM-binding methyltransferase superfamily. MenG/UbiE family.

The enzyme catalyses a 2-demethylmenaquinol + S-adenosyl-L-methionine = a menaquinol + S-adenosyl-L-homocysteine + H(+). It carries out the reaction a 2-methoxy-6-(all-trans-polyprenyl)benzene-1,4-diol + S-adenosyl-L-methionine = a 5-methoxy-2-methyl-3-(all-trans-polyprenyl)benzene-1,4-diol + S-adenosyl-L-homocysteine + H(+). The protein operates within quinol/quinone metabolism; menaquinone biosynthesis; menaquinol from 1,4-dihydroxy-2-naphthoate: step 2/2. It functions in the pathway cofactor biosynthesis; ubiquinone biosynthesis. In terms of biological role, methyltransferase required for the conversion of demethylmenaquinol (DMKH2) to menaquinol (MKH2) and the conversion of 2-polyprenyl-6-methoxy-1,4-benzoquinol (DDMQH2) to 2-polyprenyl-3-methyl-6-methoxy-1,4-benzoquinol (DMQH2). This Acidiphilium cryptum (strain JF-5) protein is Ubiquinone/menaquinone biosynthesis C-methyltransferase UbiE.